The sequence spans 164 residues: MRQKVVFPGTFDPLTSGHFDLINRASILFDEVILAVAASPGKRPLFSLEERLALAKEVCQSLPNVTITGFSNLLIDFMKEQQATILLRGIRTGSDFEYESQLAAMYRRMMPEMEIIFLPPAEQYAFVSSTLVREIALHGGDAGQFVTPNVAEAIKAKQLQLAQS.

Thr10 lines the substrate pocket. ATP contacts are provided by residues 10 to 11 (TF) and His18. Positions 42, 74, and 88 each coordinate substrate. ATP is bound by residues 89–91 (GIR), Glu99, and 124–130 (YAFVSST).

The protein belongs to the bacterial CoaD family. Homohexamer. It depends on Mg(2+) as a cofactor.

It is found in the cytoplasm. It catalyses the reaction (R)-4'-phosphopantetheine + ATP + H(+) = 3'-dephospho-CoA + diphosphate. It participates in cofactor biosynthesis; coenzyme A biosynthesis; CoA from (R)-pantothenate: step 4/5. Reversibly transfers an adenylyl group from ATP to 4'-phosphopantetheine, yielding dephospho-CoA (dPCoA) and pyrophosphate. The chain is Phosphopantetheine adenylyltransferase from Tolumonas auensis (strain DSM 9187 / NBRC 110442 / TA 4).